A 466-amino-acid polypeptide reads, in one-letter code: 3-isopropylmalate dehydratase large subunit (466 aa).

[4Fe-4S] cluster contacts are provided by Cys347, Cys407, and Cys410.

This sequence belongs to the aconitase/IPM isomerase family. LeuC type 1 subfamily. In terms of assembly, heterodimer of LeuC and LeuD. [4Fe-4S] cluster is required as a cofactor.

The catalysed reaction is (2R,3S)-3-isopropylmalate = (2S)-2-isopropylmalate. Its pathway is amino-acid biosynthesis; L-leucine biosynthesis; L-leucine from 3-methyl-2-oxobutanoate: step 2/4. Its function is as follows. Catalyzes the isomerization between 2-isopropylmalate and 3-isopropylmalate, via the formation of 2-isopropylmaleate. This chain is 3-isopropylmalate dehydratase large subunit, found in Escherichia coli O157:H7.